The following is a 446-amino-acid chain: Methionine aminopeptidase 2-3 (446 aa).

A disordered region spans residues 14–116 (ITDAGANGAD…ENRYRTTSEE (103 aa)). A compositionally biased stretch (basic residues) spans 61–76 (AKKKKNKKRKPKKKQP). Residues 86 to 96 (PLSQLFPNNSY) show a composition bias toward polar residues. A compositionally biased stretch (basic and acidic residues) spans 98–116 (KGEEVEYKDENRYRTTSEE). A substrate-binding site is contributed by His199. A divalent metal cation-binding residues include Asp219, Asp230, and His299. A substrate-binding site is contributed by His307. 2 residues coordinate a divalent metal cation: Glu332 and Glu427.

This sequence belongs to the peptidase M24A family. Methionine aminopeptidase eukaryotic type 2 subfamily. Co(2+) is required as a cofactor. It depends on Zn(2+) as a cofactor. Mn(2+) serves as cofactor. The cofactor is Fe(2+).

Its subcellular location is the cytoplasm. The enzyme catalyses Release of N-terminal amino acids, preferentially methionine, from peptides and arylamides.. In terms of biological role, cotranslationally removes the N-terminal methionine from nascent proteins. The N-terminal methionine is often cleaved when the second residue in the primary sequence is small and uncharged (Met-Ala-, Cys, Gly, Pro, Ser, Thr, or Val). The protein is Methionine aminopeptidase 2-3 of Aspergillus fumigatus (strain CBS 144.89 / FGSC A1163 / CEA10) (Neosartorya fumigata).